A 408-amino-acid polypeptide reads, in one-letter code: Cytotoxic granule-associated RNA binding protein tiar-1 (408 aa).

RRM domains are found at residues 46–121 (RTLY…WAVE), 135–213 (FHVF…WATR), and 241–312 (TSVY…WGKT).

Expressed in the germline and also in somatic tissues. Expressed in Ggonads and oocytes. Expression is slightly reduced in the most proximal oocytes, especially the -1 oocyte. Aggregates mostly in the head neurons, muscles, intestine, vulval and hypodermal cells during heat shock. Expressed only in the intestine as a response to heat shock, starvation and dietary restriction.

Its subcellular location is the cytoplasm. It is found in the nucleus. It localises to the stress granule. In terms of biological role, acts downstream of ced-9 in the induction of germline apoptosis under different stress conditions including starvation, osmotic, oxidative, heat shock and UV stress. Plays a role in the formation of stress granules in response to heat shock and oxidative stress but not in response to osmotic stress. Required for the formation of stress granules in the core gonad but may not play a critical role in this process in the oocytes. Plays an important role in the formation of stress granules in the embryo. Protects female germ cells and embryos from heat shock. The polypeptide is Cytotoxic granule-associated RNA binding protein tiar-1 (Caenorhabditis elegans).